We begin with the raw amino-acid sequence, 108 residues long: Inner membrane protein H108R (108 aa).

A helical transmembrane segment spans residues leucine 10–leucine 32. Residues glutamate 49–serine 64 are compositionally biased toward polar residues. The interval glutamate 49–lysine 69 is disordered. Asparagine 50 and asparagine 62 each carry an N-linked (GlcNAc...) asparagine; by host glycan.

It belongs to the asfivirus H108R family.

The protein resides in the virion membrane. The chain is Inner membrane protein H108R from African swine fever virus (strain Badajoz 1971 Vero-adapted) (Ba71V).